A 398-amino-acid chain; its full sequence is Tyrosine--tRNA ligase (398 aa).

Residues 42–51 (PTAPDIHLGH) carry the 'HIGH' region motif. Residues 226–230 (KMSKS) carry the 'KMSKS' region motif. ATP is bound at residue K229. Residues 336–397 (LAIANLLKDA…GKRKFAKVTL (62 aa)) enclose the S4 RNA-binding domain.

This sequence belongs to the class-I aminoacyl-tRNA synthetase family. TyrS type 2 subfamily. Homodimer.

It is found in the cytoplasm. It catalyses the reaction tRNA(Tyr) + L-tyrosine + ATP = L-tyrosyl-tRNA(Tyr) + AMP + diphosphate + H(+). Functionally, catalyzes the attachment of tyrosine to tRNA(Tyr) in a two-step reaction: tyrosine is first activated by ATP to form Tyr-AMP and then transferred to the acceptor end of tRNA(Tyr). The sequence is that of Tyrosine--tRNA ligase from Shewanella oneidensis (strain ATCC 700550 / JCM 31522 / CIP 106686 / LMG 19005 / NCIMB 14063 / MR-1).